The sequence spans 455 residues: Bifunctional protein GlmU (455 aa).

Positions 1–226 are pyrophosphorylase; the sequence is MSLDIVILAA…AMEVQGANDR (226 aa). UDP-N-acetyl-alpha-D-glucosamine is bound by residues 8–11, Lys22, Gln73, 78–79, 99–101, Gly136, Glu151, Asn166, and Asn224; these read LAAG, GT, and YGD. Asp101 is a binding site for Mg(2+). Mg(2+) is bound at residue Asn224. Residues 227-247 are linker; it reads KQLSELERHYQLREARRLMAG. Residues 248 to 455 are N-acetyltransferase; that stretch reads GVTLRDPARF…WKRPVKIRKD (208 aa). UDP-N-acetyl-alpha-D-glucosamine is bound by residues Arg330 and Lys348. His360 serves as the catalytic Proton acceptor. The UDP-N-acetyl-alpha-D-glucosamine site is built by Tyr363 and Asn374. Residues Ala377, 383 to 384, Ser402, Ala420, and Arg437 contribute to the acetyl-CoA site; that span reads NY.

The protein in the N-terminal section; belongs to the N-acetylglucosamine-1-phosphate uridyltransferase family. In the C-terminal section; belongs to the transferase hexapeptide repeat family. As to quaternary structure, homotrimer. The cofactor is Mg(2+).

The protein resides in the cytoplasm. It catalyses the reaction alpha-D-glucosamine 1-phosphate + acetyl-CoA = N-acetyl-alpha-D-glucosamine 1-phosphate + CoA + H(+). The enzyme catalyses N-acetyl-alpha-D-glucosamine 1-phosphate + UTP + H(+) = UDP-N-acetyl-alpha-D-glucosamine + diphosphate. It participates in nucleotide-sugar biosynthesis; UDP-N-acetyl-alpha-D-glucosamine biosynthesis; N-acetyl-alpha-D-glucosamine 1-phosphate from alpha-D-glucosamine 6-phosphate (route II): step 2/2. It functions in the pathway nucleotide-sugar biosynthesis; UDP-N-acetyl-alpha-D-glucosamine biosynthesis; UDP-N-acetyl-alpha-D-glucosamine from N-acetyl-alpha-D-glucosamine 1-phosphate: step 1/1. The protein operates within bacterial outer membrane biogenesis; LPS lipid A biosynthesis. Its function is as follows. Catalyzes the last two sequential reactions in the de novo biosynthetic pathway for UDP-N-acetylglucosamine (UDP-GlcNAc). The C-terminal domain catalyzes the transfer of acetyl group from acetyl coenzyme A to glucosamine-1-phosphate (GlcN-1-P) to produce N-acetylglucosamine-1-phosphate (GlcNAc-1-P), which is converted into UDP-GlcNAc by the transfer of uridine 5-monophosphate (from uridine 5-triphosphate), a reaction catalyzed by the N-terminal domain. This is Bifunctional protein GlmU from Pseudomonas savastanoi pv. phaseolicola (strain 1448A / Race 6) (Pseudomonas syringae pv. phaseolicola (strain 1448A / Race 6)).